The chain runs to 381 residues: DNA double-strand break repair protein Mre11 (381 aa).

The Mn(2+) site is built by D9, H11, D50, and D85. Catalysis depends on H86, which acts as the Proton donor. Mn(2+)-binding residues include H156, H187, and H189.

Belongs to the MRE11/RAD32 family. As to quaternary structure, homodimer. Forms a heterotetramer composed of two Mre11 subunits and two Rad50 subunits. Mn(2+) serves as cofactor.

Its activity is regulated as follows. Nuclease activity is regulated by Rad50. Its function is as follows. Part of the Rad50/Mre11 complex, which is involved in the early steps of DNA double-strand break (DSB) repair. The complex may facilitate opening of the processed DNA ends to aid in the recruitment of HerA and NurA. Mre11 binds to DSB ends and has both double-stranded 3'-5' exonuclease activity and single-stranded endonuclease activity. The sequence is that of DNA double-strand break repair protein Mre11 from Saccharolobus solfataricus (strain ATCC 35092 / DSM 1617 / JCM 11322 / P2) (Sulfolobus solfataricus).